Here is a 59-residue protein sequence, read N- to C-terminus: Beta-defensin 134 (59 aa).

The first 19 residues, 1 to 19 (MKPLLVVFVFLFLWDPVLA), serve as a signal peptide directing secretion. Disulfide bonds link Cys-25–Cys-51, Cys-31–Cys-45, and Cys-35–Cys-52.

This sequence belongs to the beta-defensin family.

The protein resides in the secreted. Functionally, has antibacterial activity. This Pan troglodytes (Chimpanzee) protein is Beta-defensin 134 (DEFB134).